Here is a 239-residue protein sequence, read N- to C-terminus: DNA repair protein RecO (239 aa).

Belongs to the RecO family.

Involved in DNA repair and RecF pathway recombination. The polypeptide is DNA repair protein RecO (Cereibacter sphaeroides (strain KD131 / KCTC 12085) (Rhodobacter sphaeroides)).